The primary structure comprises 2242 residues: DEP domain-containing protein DDB_G0279099 (2242 aa).

Disordered stretches follow at residues S388 to S465, D576 to V644, P701 to K730, D871 to S965, Q1077 to S1194, G1287 to S1336, S1384 to E1414, A1446 to G1471, and S1502 to N1521. Residues I392–N440 are a coiled coil. Over residues G581 to D614 the composition is skewed to low complexity. Over residues E622–D631 the composition is skewed to acidic residues. Composition is skewed to polar residues over residues N632 to S642 and H719 to Q729. The span at P872–S955 shows a compositional bias: low complexity. Positions I1066–F1101 form a coiled coil. The segment covering Q1082–S1106 has biased composition (basic and acidic residues). 2 stretches are compositionally biased toward low complexity: residues S1108 to A1182 and G1287 to S1299. Polar residues predominate over residues A1300–I1311. Composition is skewed to low complexity over residues N1312–S1336, S1384–N1410, and A1446–S1470. The DEP domain occupies I1556–E1629. The segment covering T1645 to S1668 has biased composition (low complexity). Disordered regions lie at residues T1645–N1763, D1803–Q1910, N2122–K2145, and N2165–M2218. Polar residues predominate over residues I1669–L1702. Low complexity-rich tracts occupy residues S1703–S1760 and G1807–S1848. Residues L1791–N1821 are a coiled coil. Composition is skewed to polar residues over residues G1849–L1871 and Y1879–H1889. 2 stretches are compositionally biased toward low complexity: residues Q1890 to Q1910 and N2122 to N2133. Basic and acidic residues-rich tracts occupy residues S2166–H2181 and D2192–M2218.

It in the N-terminal section; belongs to the IML1 family.

The protein is DEP domain-containing protein DDB_G0279099 of Dictyostelium discoideum (Social amoeba).